We begin with the raw amino-acid sequence, 147 residues long: Large ribosomal subunit protein uL13 (147 aa).

The disordered stretch occupies residues 128–147; the sequence is DQHPHGAQQPQPFEITQVAQ.

Belongs to the universal ribosomal protein uL13 family. In terms of assembly, part of the 50S ribosomal subunit.

Its function is as follows. This protein is one of the early assembly proteins of the 50S ribosomal subunit, although it is not seen to bind rRNA by itself. It is important during the early stages of 50S assembly. The sequence is that of Large ribosomal subunit protein uL13 from Streptomyces coelicolor (strain ATCC BAA-471 / A3(2) / M145).